The sequence spans 162 residues: Nucleotide-binding protein ABSDF0503 (162 aa).

The protein belongs to the YajQ family.

Its function is as follows. Nucleotide-binding protein. In Acinetobacter baumannii (strain SDF), this protein is Nucleotide-binding protein ABSDF0503.